The chain runs to 352 residues: Alanine racemase (352 aa).

The active-site Proton acceptor; specific for D-alanine is Lys34. Lys34 carries the N6-(pyridoxal phosphate)lysine modification. Arg126 provides a ligand contact to substrate. The active-site Proton acceptor; specific for L-alanine is Tyr248. Met296 serves as a coordination point for substrate.

Belongs to the alanine racemase family. Pyridoxal 5'-phosphate serves as cofactor.

It catalyses the reaction L-alanine = D-alanine. The protein operates within amino-acid biosynthesis; D-alanine biosynthesis; D-alanine from L-alanine: step 1/1. Functionally, catalyzes the interconversion of L-alanine and D-alanine. May also act on other amino acids. This chain is Alanine racemase (alr), found in Deinococcus deserti (strain DSM 17065 / CIP 109153 / LMG 22923 / VCD115).